Here is a 32-residue protein sequence, read N- to C-terminus: Photosystem II reaction center protein T (32 aa).

The helical transmembrane segment at 3–23 threads the bilayer; it reads AITYTFILFLTLGLLFFAVAF.

It belongs to the PsbT family. PSII is composed of 1 copy each of membrane proteins PsbA, PsbB, PsbC, PsbD, PsbE, PsbF, PsbH, PsbI, PsbJ, PsbK, PsbL, PsbM, PsbT, PsbX, PsbY, PsbZ, Psb30/Ycf12, peripheral proteins PsbO, CyanoQ (PsbQ), PsbU, PsbV and a large number of cofactors. It forms dimeric complexes.

The protein resides in the cellular thylakoid membrane. Its function is as follows. Found at the monomer-monomer interface of the photosystem II (PS II) dimer, plays a role in assembly and dimerization of PSII. PSII is a light-driven water plastoquinone oxidoreductase, using light energy to abstract electrons from H(2)O, generating a proton gradient subsequently used for ATP formation. This Synechococcus sp. (strain JA-2-3B'a(2-13)) (Cyanobacteria bacterium Yellowstone B-Prime) protein is Photosystem II reaction center protein T.